The following is a 503-amino-acid chain: Maturase K (503 aa).

It belongs to the intron maturase 2 family. MatK subfamily.

The protein resides in the plastid. Its subcellular location is the chloroplast. Usually encoded in the trnK tRNA gene intron. Probably assists in splicing its own and other chloroplast group II introns. In Vicia villosa (Hairy vetch), this protein is Maturase K.